Here is a 187-residue protein sequence, read N- to C-terminus: MSINEYAKELKAALAQYPNFPKEGVLFEDFLPIFRSPQLFQKLIDAFKMHLAEAFPETKIDYLVGLESRGFLFGPSLALAIGAGFVPVRKAGKLPGQVVKTTYVKEYEEDVFEMQVDSIPVGATVVVVDDILATGGSAGAAGDLIKQLGATILEFIFVMELDFLKGREKLQAPVFTLLQGQEEALGN.

133–137 (ATGGS) is a binding site for AMP.

This sequence belongs to the purine/pyrimidine phosphoribosyltransferase family. As to quaternary structure, homodimer. Requires Mg(2+) as cofactor.

It localises to the cytoplasm. The protein resides in the nucleus. It carries out the reaction AMP + diphosphate = 5-phospho-alpha-D-ribose 1-diphosphate + adenine. It functions in the pathway purine metabolism; AMP biosynthesis via salvage pathway; AMP from adenine: step 1/1. Catalyzes a salvage reaction resulting in the formation of AMP, that is energically less costly than de novo synthesis. In Eremothecium gossypii (strain ATCC 10895 / CBS 109.51 / FGSC 9923 / NRRL Y-1056) (Yeast), this protein is Adenine phosphoribosyltransferase (APT1).